Reading from the N-terminus, the 830-residue chain is Heavy metal tolerance protein (830 aa).

The first 27 residues, 1-27 (MVLRYNSPRLNILELVLLYVGFFSIGS), serve as a signal peptide directing secretion. 3 helical membrane passes run 51–71 (PIGI…VDIS), 88–108 (TTVV…ISCA), and 126–146 (LSVL…IVYS). A glycan (N-linked (GlcNAc...) asparagine) is linked at N150. The next 3 membrane-spanning stretches (helical) occupy residues 156–176 (IVLA…AIYL), 263–283 (FQIF…ILAP), and 304–324 (DVIL…IGSL). In terms of domain architecture, ABC transmembrane type-1 spans 265-550 (IFICIVLLFL…FGTLYRSLQN (286 aa)). N-linked (GlcNAc...) asparagine glycosylation occurs at N350. The next 2 membrane-spanning stretches (helical) occupy residues 381–401 (VVFQ…YFFI) and 403–423 (FDIY…YVTV). Glutathione contacts are provided by residues 429-433 (RTEAR), 492-495 (NIVQ), and G542. A helical transmembrane segment spans residues 490–511 (FLNIVQGGIFTFSLAIACLLSA). An ABC transporter domain is found at 584–818 (VIFSHVSFAY…DGGAYKKMWF (235 aa)). Residues Y593 and 617–628 (GESGGGKSTIMR) contribute to the ATP site.

It belongs to the ABC transporter superfamily. ABCB family. Heavy Metal importer (TC 3.A.1.210) subfamily.

It localises to the vacuole membrane. Involved in metal tolerance. Probably involved in the transport of metal-bound phytochelatins. Compartmentalizes cadmium within vacuoles, thereby protecting cells from cadmium toxicity. The polypeptide is Heavy metal tolerance protein (hmt1) (Schizosaccharomyces pombe (strain 972 / ATCC 24843) (Fission yeast)).